Here is a 353-residue protein sequence, read N- to C-terminus: MYPKITIDINKLRDNATFIKNLCEKGGCKTALVVKSMCANHDIVKELDSVEVDYFADSRIQNLKKLKDLKTKKMLLRIPMLCEVEDVVKYADISMNSELDTLKALNKAAKTLNKVHSVIIMVDLGDLREGYFEAEDLKENIKEIIKLENIEIKGIGVNLTCYGAVIPKNDNLSRLCDIADELRTEFNLELPIVSGGNSSSIYLIDKGELPEGITNLRVGESMLLGRETAYGEDIIGMNNDVFELKCQIVELKEKPSLPIGEIGVDAFGNKPYYEDKGIRKRAILAIGQQDTDISSLMPIDDKLEILGASSDHLIVDVSDSNTSYKVGDIITFRMGYGALLKGFTSEYIEKELL.

The active-site Proton acceptor is Lys35. The residue at position 35 (Lys35) is an N6-(pyridoxal phosphate)lysine. Arg128 lines the substrate pocket.

The protein belongs to the alanine racemase family. Homodimer. Requires pyridoxal 5'-phosphate as cofactor.

It catalyses the reaction L-ornithine = D-ornithine. Its function is as follows. Involved in the ornithine fermentation pathway. Catalyzes the conversion of L-ornithine to D-ornithine. OR could also racemize basic amino acids such as lysine and arginine. Serine, asparagine and alanine could be also converted by OR, but at a lower rate. This Acetoanaerobium sticklandii (strain ATCC 12662 / DSM 519 / JCM 1433 / CCUG 9281 / NCIMB 10654 / HF) (Clostridium sticklandii) protein is Ornithine racemase.